Consider the following 541-residue polypeptide: Chaperonin GroEL 2 (541 aa).

Residues 30–33 (TLGP), K51, 87–91 (DGTTT), G415, and D496 contribute to the ATP site.

The protein belongs to the chaperonin (HSP60) family. As to quaternary structure, forms a cylinder of 14 subunits composed of two heptameric rings stacked back-to-back. Interacts with the co-chaperonin GroES.

Its subcellular location is the cytoplasm. It carries out the reaction ATP + H2O + a folded polypeptide = ADP + phosphate + an unfolded polypeptide.. In terms of biological role, together with its co-chaperonin GroES, plays an essential role in assisting protein folding. The GroEL-GroES system forms a nano-cage that allows encapsulation of the non-native substrate proteins and provides a physical environment optimized to promote and accelerate protein folding. The polypeptide is Chaperonin GroEL 2 (Gluconacetobacter diazotrophicus (strain ATCC 49037 / DSM 5601 / CCUG 37298 / CIP 103539 / LMG 7603 / PAl5)).